Reading from the N-terminus, the 176-residue chain is RNA polymerase sigma factor SigZ (176 aa).

The short motif at 30–43 (DLLQIVFMKIQVHL) is the Polymerase core binding element. A DNA-binding region (H-T-H motif) is located at residues 125–144 (QKELSEKLGISYSGAKSRVQ).

This sequence belongs to the sigma-70 factor family. ECF subfamily.

Sigma factors are initiation factors that promote the attachment of RNA polymerase to specific initiation sites and are then released. The chain is RNA polymerase sigma factor SigZ (sigZ) from Bacillus subtilis (strain 168).